The chain runs to 192 residues: Phosphoheptose isomerase (192 aa).

The SIS domain occupies 37-192 (ITDSFKNGGK…MMLIEFEMAK (156 aa)). 52-54 (NGG) is a substrate binding site. The Zn(2+) site is built by histidine 61 and glutamate 65. Residues glutamate 65, 93 to 94 (ND), 119 to 121 (STS), serine 124, and glutamine 172 each bind substrate. Zn(2+) contacts are provided by glutamine 172 and histidine 180.

It belongs to the SIS family. GmhA subfamily. As to quaternary structure, homotetramer. Zn(2+) is required as a cofactor.

Its subcellular location is the cytoplasm. It catalyses the reaction 2 D-sedoheptulose 7-phosphate = D-glycero-alpha-D-manno-heptose 7-phosphate + D-glycero-beta-D-manno-heptose 7-phosphate. The protein operates within carbohydrate biosynthesis; D-glycero-D-manno-heptose 7-phosphate biosynthesis; D-glycero-alpha-D-manno-heptose 7-phosphate and D-glycero-beta-D-manno-heptose 7-phosphate from sedoheptulose 7-phosphate: step 1/1. Functionally, catalyzes the isomerization of sedoheptulose 7-phosphate in D-glycero-D-manno-heptose 7-phosphate. This chain is Phosphoheptose isomerase, found in Glaesserella parasuis serovar 5 (strain SH0165) (Haemophilus parasuis).